Consider the following 180-residue polypeptide: Molybdopterin synthase catalytic subunit (180 aa).

Substrate-binding positions include 123 to 124, lysine 139, and 146 to 148; these read HR and KLE. Residues 161 to 180 are disordered; it reads RDGQKGVKVEGGKEGVEAKH.

It belongs to the MoaE family. MOCS2B subfamily. Heterotetramer; composed of 2 small (MOCS2A) and 2 large (MOCS2B) subunits.

The protein resides in the cytoplasm. It catalyses the reaction 2 [molybdopterin-synthase sulfur-carrier protein]-C-terminal-Gly-aminoethanethioate + cyclic pyranopterin phosphate + H2O = molybdopterin + 2 [molybdopterin-synthase sulfur-carrier protein]-C-terminal Gly-Gly + 2 H(+). The protein operates within cofactor biosynthesis; molybdopterin biosynthesis. In terms of biological role, catalytic subunit of the molybdopterin synthase complex, a complex that catalyzes the conversion of precursor Z into molybdopterin. Acts by mediating the incorporation of 2 sulfur atoms from thiocarboxylated MOCS2A into precursor Z to generate a dithiolene group. The polypeptide is Molybdopterin synthase catalytic subunit (Pyrenophora tritici-repentis (strain Pt-1C-BFP) (Wheat tan spot fungus)).